A 3106-amino-acid polypeptide reads, in one-letter code: Cilia- and flagella-associated protein 54 (3106 aa).

3 stretches are compositionally biased toward low complexity: residues Met-1–Val-24, Ser-34–Ser-48, and Glu-2356–Thr-2368. Disordered stretches follow at residues Met-1 to Glu-58 and Pro-2354 to Ser-2374.

Belongs to the CFAP54 family. As to expression, expressed at high level in the testis and at a low level in the lung and brain.

It localises to the cytoplasm. It is found in the cytoskeleton. Its subcellular location is the cilium axoneme. Required for assembly and function of cilia and flagella. The protein is Cilia- and flagella-associated protein 54 of Mus musculus (Mouse).